The primary structure comprises 786 residues: Wall-associated receptor kinase-like 17 (786 aa).

Positions 1-30 (MSYKNTNNSHLILFKLLLLLILYSADLTAS) are cleaved as a signal peptide. Over 31 to 369 (SSCRSECGGC…YRCVGDKTKA (339 aa)) the chain is Extracellular. Residues Asn69, Asn122, Asn160, Asn165, and Asn274 are each glycosylated (N-linked (GlcNAc...) asparagine). The interval 301–362 (CICDYTMSII…CVNFEGGYRC (62 aa)) is atypical EGF-like. Cystine bridges form between Cys303–Cys318, Cys340–Cys353, and Cys347–Cys362. A helical transmembrane segment spans residues 370–390 (IMIGAGTGFGVLVLVGGVWWL). Residues 391–786 (RKFLVKRRMA…VEPLNPLLTW (396 aa)) lie on the Cytoplasmic side of the membrane. Thr433 carries the post-translational modification Phosphothreonine. Residues 444–719 (FSENRVLGHG…REVFTELERI (276 aa)) form the Protein kinase domain. ATP-binding positions include 450-458 (LGHGGQGTV) and Lys472. Tyr517 is subject to Phosphotyrosine. Residue Asp570 is the Proton acceptor of the active site. 2 positions are modified to phosphothreonine: Thr604 and Thr609. Residue Tyr617 is modified to Phosphotyrosine. Over residues 766–775 (SSIVASPPSS) the composition is skewed to low complexity. Positions 766 to 786 (SSIVASPPSSDVEPLNPLLTW) are disordered.

Belongs to the protein kinase superfamily. Ser/Thr protein kinase family.

The protein resides in the membrane. It catalyses the reaction L-seryl-[protein] + ATP = O-phospho-L-seryl-[protein] + ADP + H(+). The enzyme catalyses L-threonyl-[protein] + ATP = O-phospho-L-threonyl-[protein] + ADP + H(+). In terms of biological role, serine/threonine-protein kinase that may function as a signaling receptor of extracellular matrix component. This is Wall-associated receptor kinase-like 17 (WAKL17) from Arabidopsis thaliana (Mouse-ear cress).